The following is a 159-amino-acid chain: Phosphopantetheine adenylyltransferase (159 aa).

Residue Thr10 participates in substrate binding. Residues 10–11 (TF) and His18 each bind ATP. Residues Lys42, Met74, and Arg88 each coordinate substrate. ATP contacts are provided by residues 89–91 (GLR), Glu99, and 124–130 (WSFISSS).

The protein belongs to the bacterial CoaD family. As to quaternary structure, homohexamer. Mg(2+) serves as cofactor.

It localises to the cytoplasm. It catalyses the reaction (R)-4'-phosphopantetheine + ATP + H(+) = 3'-dephospho-CoA + diphosphate. The protein operates within cofactor biosynthesis; coenzyme A biosynthesis; CoA from (R)-pantothenate: step 4/5. Functionally, reversibly transfers an adenylyl group from ATP to 4'-phosphopantetheine, yielding dephospho-CoA (dPCoA) and pyrophosphate. The chain is Phosphopantetheine adenylyltransferase from Escherichia coli O7:K1 (strain IAI39 / ExPEC).